A 463-amino-acid polypeptide reads, in one-letter code: Sodium-coupled neutral amino acid transporter 7 (463 aa).

A Phosphoserine modification is found at Ser-28. The next 11 helical transmembrane spans lie at 56–76 (AVFIVVNACLGAGLLNFPAAF), 82–102 (VAAGIALQMGMLVFIISGLVI), 130–150 (LCEVAIAVYTFGTCIAFLIII), 179–199 (FTISLTAFLFILPLSIPKEIG), 206–226 (FLSVVGTWYVTAIIIIKYIWP), 240–260 (ASWMAVFNAMPTICFGFQCHV), 283–303 (AAMVIALAVYMGTGICGFLTF), 320–340 (VAVAVARAFIILSVLTSYPIL), 372–392 (VLQTLVWFLLTLLLALFIPDI), 396–416 (ISVIGGLAACFIFIFPGLCLI), and 429–449 (ASWWALVSYGVLLVTLGAFIF).

The protein belongs to the amino acid/polyamine transporter 2 family. Interacts with the mTORC1 complex; this interaction mediates the recruitment of mTORC1 to the lysosome and its subsequent activation. Highly expressed in the brain, including the hippocampus, especially in the granular layer of dentate gyrus cells and the pyramidal cell layer of the hippocampus, amygdala, thalamus, hypothalamus, in the layer of Purkinje cells in the cerebellum and the layers of cortex. Particularly strong expression in neurons of the ventromedial hypothalamus, basolateral amygdala, ventral tegmental area, and locus coeruleus. Not detected in glial cells, including astrocytes. In addition to brain, also expressed in the spinal cord (at protein level).

Its subcellular location is the lysosome membrane. It is found in the cell projection. The protein localises to the axon. It carries out the reaction L-glutamine(in) + Na(+)(in) = L-glutamine(out) + Na(+)(out). The catalysed reaction is L-asparagine(in) + Na(+)(in) = L-asparagine(out) + Na(+)(out). Symporter that selectively cotransports sodium ions and amino acids, such as L-glutamine and L-asparagine from the lysosome into the cytoplasm and may participates in mTORC1 activation. The transport activity requires an acidic lysosomal lumen. The chain is Sodium-coupled neutral amino acid transporter 7 from Mus musculus (Mouse).